The sequence spans 438 residues: 3-phosphoshikimate 1-carboxyvinyltransferase (438 aa).

The 3-phosphoshikimate site is built by K26, S27, and R31. K26 lines the phosphoenolpyruvate pocket. Phosphoenolpyruvate-binding residues include G99 and R127. 3-phosphoshikimate is bound by residues S172, Q174, D320, and K347. Q174 contacts phosphoenolpyruvate. Residue D320 is the Proton acceptor of the active site. R351 and R392 together coordinate phosphoenolpyruvate.

The protein belongs to the EPSP synthase family. In terms of assembly, monomer.

The protein resides in the cytoplasm. The catalysed reaction is 3-phosphoshikimate + phosphoenolpyruvate = 5-O-(1-carboxyvinyl)-3-phosphoshikimate + phosphate. It functions in the pathway metabolic intermediate biosynthesis; chorismate biosynthesis; chorismate from D-erythrose 4-phosphate and phosphoenolpyruvate: step 6/7. Functionally, catalyzes the transfer of the enolpyruvyl moiety of phosphoenolpyruvate (PEP) to the 5-hydroxyl of shikimate-3-phosphate (S3P) to produce enolpyruvyl shikimate-3-phosphate and inorganic phosphate. The sequence is that of 3-phosphoshikimate 1-carboxyvinyltransferase from Xanthomonas campestris pv. campestris (strain B100).